The primary structure comprises 313 residues: Ribosomal RNA small subunit methyltransferase H (313 aa).

Residues 35–37 (GGH), aspartate 55, phenylalanine 79, aspartate 100, and glutamine 107 contribute to the S-adenosyl-L-methionine site.

This sequence belongs to the methyltransferase superfamily. RsmH family.

The protein resides in the cytoplasm. The catalysed reaction is cytidine(1402) in 16S rRNA + S-adenosyl-L-methionine = N(4)-methylcytidine(1402) in 16S rRNA + S-adenosyl-L-homocysteine + H(+). In terms of biological role, specifically methylates the N4 position of cytidine in position 1402 (C1402) of 16S rRNA. The polypeptide is Ribosomal RNA small subunit methyltransferase H (Burkholderia ambifaria (strain ATCC BAA-244 / DSM 16087 / CCUG 44356 / LMG 19182 / AMMD) (Burkholderia cepacia (strain AMMD))).